We begin with the raw amino-acid sequence, 440 residues long: Discs overgrown protein kinase (440 aa).

One can recognise a Protein kinase domain in the interval 9–277 (YRLGRKIGSG…HLRKLFRNLF (269 aa)). Residues 15 to 23 (IGSGSFGDI) and Lys38 each bind ATP. Asp128 (proton acceptor) is an active-site residue. Residues 221 to 224 (KRQK) are nuclear localization signal; essential for interaction with Bdbt and important for nuclear localization. A phosphoserine mark is found at Ser333 and Ser334. A disordered region spans residues 376 to 440 (SQLIGGNGLN…GGGGGVGNAK (65 aa)). Positions 413 to 440 (QGGGGGGGGVGVGGMPSGGGGGGVGNAK) are enriched in gly residues.

It belongs to the protein kinase superfamily. CK1 Ser/Thr protein kinase family. Casein kinase I subfamily. Forms a complex with per. Interacts with Dlish. Interacts (via nuclear localization signal) with Bdbt. In terms of tissue distribution, detected in the head (at protein level). Expressed in photoreceptor cells of the eyes as well as in the region situated between the optic lobe and the central brain.

Its subcellular location is the nucleus. It localises to the cytoplasm. The protein resides in the cytosol. The enzyme catalyses L-seryl-[protein] + ATP = O-phospho-L-seryl-[protein] + ADP + H(+). It carries out the reaction L-threonyl-[protein] + ATP = O-phospho-L-threonyl-[protein] + ADP + H(+). Functionally, serine/threonine-protein kinase which is involved in the circadian rhythm pathway, viability and planar cell polarity. In the circadian rhythm pathway, phosphorylates the clock gene period (per) and targets it for degradation in the absence of timeless (tim), thus contributing to production of the circadian oscillations of the clock genes. Together with CkIalpha, regulates processing of ci by phosphorylating it, which promotes its binding to slmb, the F-box recognition component of the SCF(slmb) E3 ubiquitin-protein ligase. Involved in the inhibition of apoptosis during cell proliferation and growth arrest in imaginal disks. Also functions in planar cell polarity. This is Discs overgrown protein kinase (dco) from Drosophila melanogaster (Fruit fly).